The following is a 341-amino-acid chain: MKALSKLKAEEGIWMTDVPVPELGHNDLLIKIRKTAICGTDVHIYNWDEWSQKTIPVPMVVGHEYVGEVVGIGQEVKGFKIGDRVSGEGHITCGHCRNCRGGRTHLCRNTIGVGVNRPGCFAEYLVIPAFNAFKIPGNISDDLASIFDPFGNAVHTALSFDLVGEDVLVSGAGPIGIMAAAVAKHVGARNVVITDVNEYRLELARKMGITRAANVAKENLNDVMAELGMTEGFDVGLEMSGAPPAFRTMLDTMNHGGRIAMLGIPPSDMSIDWTKVIFKGLFIKGIYGREMFETWYKMAALIQSGLDLSPIITHRFSIDDFQKGFDAMRSGQSGKVILSWD.

A Zn(2+)-binding site is contributed by Cys-38. Active-site charge relay system residues include Thr-40 and His-43. His-63, Glu-64, Cys-93, Cys-96, Cys-99, and Cys-107 together coordinate Zn(2+). Residues Ile-175, Asp-195, Arg-200, 262-264 (LGI), and 286-287 (IY) each bind NAD(+).

It belongs to the zinc-containing alcohol dehydrogenase family. As to quaternary structure, homotetramer. Zn(2+) is required as a cofactor.

The protein localises to the cytoplasm. The catalysed reaction is L-threonine + NAD(+) = (2S)-2-amino-3-oxobutanoate + NADH + H(+). Its pathway is amino-acid degradation; L-threonine degradation via oxydo-reductase pathway; glycine from L-threonine: step 1/2. Catalyzes the NAD(+)-dependent oxidation of L-threonine to 2-amino-3-ketobutyrate. This chain is L-threonine 3-dehydrogenase, found in Shigella dysenteriae serotype 1 (strain Sd197).